A 141-amino-acid chain; its full sequence is Large ribosomal subunit protein bL21 (141 aa).

The tract at residues 111-141 (ATAPSRTEAAPESNPEAAPSAAATGIPADEE) is disordered. Positions 118–133 (EAAPESNPEAAPSAAA) are enriched in low complexity.

The protein belongs to the bacterial ribosomal protein bL21 family. Part of the 50S ribosomal subunit. Contacts protein L20.

This protein binds to 23S rRNA in the presence of protein L20. The polypeptide is Large ribosomal subunit protein bL21 (Synechococcus sp. (strain JA-2-3B'a(2-13)) (Cyanobacteria bacterium Yellowstone B-Prime)).